The following is a 380-amino-acid chain: Probable polyglutamine synthesis accessory protein MT0602 (380 aa).

Belongs to the CapA family.

Could be involved in the biosynthesis, transport or localization of poly-alpha-L-glutamine (PLG), a cell wall component. Contributes to stress tolerance and virulence. The chain is Probable polyglutamine synthesis accessory protein MT0602 from Mycobacterium tuberculosis (strain CDC 1551 / Oshkosh).